The sequence spans 256 residues: 5-keto-4-deoxy-D-glucarate aldolase (256 aa).

The active-site Proton acceptor is His-50. Position 151 (Gln-151) interacts with substrate. Glu-153 is a Mg(2+) binding site. 2 residues coordinate substrate: Ser-178 and Asp-179. Residue Asp-179 participates in Mg(2+) binding.

Belongs to the HpcH/HpaI aldolase family. KDGluc aldolase subfamily. As to quaternary structure, homohexamer; trimer of dimers. The cofactor is Mg(2+).

It catalyses the reaction 5-dehydro-4-deoxy-D-glucarate = 2-hydroxy-3-oxopropanoate + pyruvate. The enzyme catalyses 2-dehydro-3-deoxy-D-glucarate = 2-hydroxy-3-oxopropanoate + pyruvate. Its pathway is carbohydrate acid metabolism; galactarate degradation; D-glycerate from galactarate: step 2/3. Catalyzes the reversible retro-aldol cleavage of both 5-keto-4-deoxy-D-glucarate and 2-keto-3-deoxy-D-glucarate to pyruvate and tartronic semialdehyde. This is 5-keto-4-deoxy-D-glucarate aldolase from Escherichia fergusonii (strain ATCC 35469 / DSM 13698 / CCUG 18766 / IAM 14443 / JCM 21226 / LMG 7866 / NBRC 102419 / NCTC 12128 / CDC 0568-73).